The primary structure comprises 257 residues: Reticulon-like protein B4 (257 aa).

The disordered stretch occupies residues 19 to 42 (IHGHGDSSSLSDSDDDKKSTSSSS). The Reticulon domain maps to 68-257 (PADIFLWRNK…PRGALNKKKD (190 aa)). The next 3 helical transmembrane spans lie at 78 to 98 (KVSGGVLGAVTASWVLFELFE), 99 to 119 (YHLLAFLCHFAIFALAALFLW), and 173 to 193 (FILVIAGLWVLSIIGSCYNFL).

Interacts with VirB2.

It localises to the endoplasmic reticulum membrane. Plays a role in the Agrobacterium-mediated plant transformation via its interaction with VirB2, the major component of the T-pilus. The chain is Reticulon-like protein B4 (RTNLB4) from Arabidopsis thaliana (Mouse-ear cress).